The chain runs to 160 residues: Endoribonuclease YbeY (160 aa).

Positions 121, 125, and 131 each coordinate Zn(2+).

This sequence belongs to the endoribonuclease YbeY family. Requires Zn(2+) as cofactor.

Its subcellular location is the cytoplasm. Functionally, single strand-specific metallo-endoribonuclease involved in late-stage 70S ribosome quality control and in maturation of the 3' terminus of the 16S rRNA. The polypeptide is Endoribonuclease YbeY (Hydrogenovibrio crunogenus (strain DSM 25203 / XCL-2) (Thiomicrospira crunogena)).